Here is a 496-residue protein sequence, read N- to C-terminus: Probable G-protein coupled receptor Mth-like 5 (496 aa).

Residues 1 to 219 (MLVKTLGAHF…SNFLLRKILN (219 aa)) are Extracellular-facing. N-linked (GlcNAc...) asparagine glycosylation occurs at Asn-82. The helical transmembrane segment at 220-240 (PIFHGISLVILLVIAIIYFIL) threads the bilayer. Residues 241–246 (PTLRDL) lie on the Cytoplasmic side of the membrane. A helical transmembrane segment spans residues 247–267 (VGNIVTTIAMCLMVSQAADLV). Over 268-276 (RIFTELTSH) the chain is Extracellular. The helical transmembrane segment at 277 to 297 (VSFIVADIILCFSLLAAFFWL) threads the bilayer. At 298 to 327 (NSFGFYIWKTFRSRNVFLRVTDGRKYCYYS) the chain is on the cytoplasmic side. A helical membrane pass occupies residues 328 to 348 (AYAWGCTATMAALAVFAHFFL). At 349 to 366 (DAESYKQEHMVGEQETIG) the chain is on the extracellular side. Residues 367–387 (WLGICIFFAPIACTILVNIFF) form a helical membrane-spanning segment. Over 388–411 (YVTTRKLINRRTVYGRIAHKLKAN) the chain is Cytoplasmic. The helical transmembrane segment at 412-432 (FIMFSLMLLVMSIAWLFLIMS) threads the bilayer. The Extracellular segment spans residues 433–438 (WLQMEG). Residues 439 to 459 (LLYAHIVVNALQTPLLLYICV) form a helical membrane-spanning segment. At 460–496 (LRQRHVTFLLKKTCCYNEPPSANDWGDELHYMNGNDY) the chain is on the cytoplasmic side.

The protein belongs to the G-protein coupled receptor 2 family. Mth subfamily.

Its subcellular location is the cell membrane. The polypeptide is Probable G-protein coupled receptor Mth-like 5 (mthl5) (Drosophila melanogaster (Fruit fly)).